Here is a 238-residue protein sequence, read N- to C-terminus: Carboxymethylenebutenolidase (238 aa).

Active-site residues include cysteine 123, aspartate 171, and histidine 201.

It belongs to the dienelactone hydrolase family. As to quaternary structure, monomer.

The catalysed reaction is 2-(5-oxo-2,5-dihydrofuran-2-ylidene)acetate + H2O = 4-oxohex-2-enedioate + H(+). It participates in aromatic compound metabolism; 3-chlorocatechol degradation. Its function is as follows. Ring cleavage of cyclic ester dienelactone to produce maleylacetate. This chain is Carboxymethylenebutenolidase (tcbE), found in Pseudomonas sp. (strain P51).